The sequence spans 82 residues: Cortexin-1 (82 aa).

Residues 1-20 are disordered; it reads MSAPWTLSPEPLPPSTGPPV. The helical transmembrane segment at 30–50 threads the bilayer; that stretch reads TVFAFVLCLLVVLVLLMVRCV.

Belongs to the cortexin family. As to expression, neuron specific.

Its subcellular location is the membrane. Functionally, may mediate extracellular or intracellular signaling of cortical neurons during forebrain development. This is Cortexin-1 (Ctxn1) from Rattus norvegicus (Rat).